Consider the following 163-residue polypeptide: HTH-type transcriptional regulator IscR (163 aa).

An HTH rrf2-type domain is found at Arg-2–Asn-131. The H-T-H motif DNA-binding region spans Leu-28–Lys-51. [2Fe-2S] cluster-binding residues include Cys-92, Cys-98, and Cys-104.

Requires [2Fe-2S] cluster as cofactor.

Functionally, regulates the transcription of several operons and genes involved in the biogenesis of Fe-S clusters and Fe-S-containing proteins. The chain is HTH-type transcriptional regulator IscR from Enterobacter sp. (strain 638).